The sequence spans 550 residues: Arginine--tRNA ligase (550 aa).

Positions 130 to 140 (ANPTGPIHIGG) match the 'HIGH' region motif.

The protein belongs to the class-I aminoacyl-tRNA synthetase family. In terms of assembly, monomer.

The protein localises to the cytoplasm. The enzyme catalyses tRNA(Arg) + L-arginine + ATP = L-arginyl-tRNA(Arg) + AMP + diphosphate. The polypeptide is Arginine--tRNA ligase (argS) (Mycobacterium leprae (strain TN)).